A 201-amino-acid polypeptide reads, in one-letter code: Peptidyl-tRNA hydrolase (201 aa).

Tyr-17 is a binding site for tRNA. His-22 (proton acceptor) is an active-site residue. Residues Phe-76, Asn-78, and Asn-124 each contribute to the tRNA site.

The protein belongs to the PTH family. Monomer.

It is found in the cytoplasm. It catalyses the reaction an N-acyl-L-alpha-aminoacyl-tRNA + H2O = an N-acyl-L-amino acid + a tRNA + H(+). Its function is as follows. Hydrolyzes ribosome-free peptidyl-tRNAs (with 1 or more amino acids incorporated), which drop off the ribosome during protein synthesis, or as a result of ribosome stalling. Functionally, catalyzes the release of premature peptidyl moieties from peptidyl-tRNA molecules trapped in stalled 50S ribosomal subunits, and thus maintains levels of free tRNAs and 50S ribosomes. The chain is Peptidyl-tRNA hydrolase from Nitratidesulfovibrio vulgaris (strain ATCC 29579 / DSM 644 / CCUG 34227 / NCIMB 8303 / VKM B-1760 / Hildenborough) (Desulfovibrio vulgaris).